The sequence spans 200 residues: Dephospho-CoA kinase (200 aa).

Residues Val4–Asp200 form the DPCK domain. Ala12–Thr17 provides a ligand contact to ATP.

It belongs to the CoaE family.

Its subcellular location is the cytoplasm. The catalysed reaction is 3'-dephospho-CoA + ATP = ADP + CoA + H(+). Its pathway is cofactor biosynthesis; coenzyme A biosynthesis; CoA from (R)-pantothenate: step 5/5. Functionally, catalyzes the phosphorylation of the 3'-hydroxyl group of dephosphocoenzyme A to form coenzyme A. This is Dephospho-CoA kinase from Bacillus thuringiensis subsp. konkukian (strain 97-27).